A 526-amino-acid polypeptide reads, in one-letter code: 3',5'-cyclic-nucleotide phosphodiesterase 2 (526 aa).

One can recognise a PDEase domain in the interval 182-526 (RNIEFMSFLS…EYWMKHKKPQ (345 aa)). Catalysis depends on histidine 265, which acts as the Proton donor. Histidine 269, histidine 302, aspartate 303, and aspartate 400 together coordinate a divalent metal cation.

It belongs to the cyclic nucleotide phosphodiesterase family. Monomer. Requires a divalent metal cation as cofactor.

It carries out the reaction 3',5'-cyclic AMP + H2O = AMP + H(+). Its function is as follows. Controls the level of cAMP in yeast cells, together with the low-affinity cAMP phosphodiesterase (PDE1). In Saccharomyces cerevisiae (strain ATCC 204508 / S288c) (Baker's yeast), this protein is 3',5'-cyclic-nucleotide phosphodiesterase 2.